Consider the following 1252-residue polypeptide: DNA-directed RNA polymerase subunit beta (1252 aa).

This sequence belongs to the RNA polymerase beta chain family. As to quaternary structure, the RNAP catalytic core consists of 2 alpha, 1 beta, 1 beta' and 1 omega subunit. When a sigma factor is associated with the core the holoenzyme is formed, which can initiate transcription.

It carries out the reaction RNA(n) + a ribonucleoside 5'-triphosphate = RNA(n+1) + diphosphate. Its function is as follows. DNA-dependent RNA polymerase catalyzes the transcription of DNA into RNA using the four ribonucleoside triphosphates as substrates. This chain is DNA-directed RNA polymerase subunit beta, found in Chlamydia felis (strain Fe/C-56) (Chlamydophila felis).